A 177-amino-acid chain; its full sequence is Inorganic pyrophosphatase (177 aa).

Residues Lys-30, Arg-44, and Tyr-56 each contribute to the substrate site. 3 residues coordinate Mg(2+): Asp-66, Asp-71, and Asp-103. Tyr-142 provides a ligand contact to substrate.

The protein belongs to the PPase family. Homohexamer. Mg(2+) is required as a cofactor.

The protein localises to the cytoplasm. The catalysed reaction is diphosphate + H2O = 2 phosphate + H(+). Functionally, catalyzes the hydrolysis of inorganic pyrophosphate (PPi) forming two phosphate ions. In Mesorhizobium japonicum (strain LMG 29417 / CECT 9101 / MAFF 303099) (Mesorhizobium loti (strain MAFF 303099)), this protein is Inorganic pyrophosphatase.